Here is a 250-residue protein sequence, read N- to C-terminus: Leucyl/phenylalanyl-tRNA--protein transferase (250 aa).

The protein belongs to the L/F-transferase family.

It is found in the cytoplasm. The catalysed reaction is N-terminal L-lysyl-[protein] + L-leucyl-tRNA(Leu) = N-terminal L-leucyl-L-lysyl-[protein] + tRNA(Leu) + H(+). It carries out the reaction N-terminal L-arginyl-[protein] + L-leucyl-tRNA(Leu) = N-terminal L-leucyl-L-arginyl-[protein] + tRNA(Leu) + H(+). It catalyses the reaction L-phenylalanyl-tRNA(Phe) + an N-terminal L-alpha-aminoacyl-[protein] = an N-terminal L-phenylalanyl-L-alpha-aminoacyl-[protein] + tRNA(Phe). Functionally, functions in the N-end rule pathway of protein degradation where it conjugates Leu, Phe and, less efficiently, Met from aminoacyl-tRNAs to the N-termini of proteins containing an N-terminal arginine or lysine. In Bordetella avium (strain 197N), this protein is Leucyl/phenylalanyl-tRNA--protein transferase.